A 521-amino-acid chain; its full sequence is Endoplasmic reticulum mannosyl-oligosaccharide 1,2-alpha-mannosidase (521 aa).

Residues methionine 1–lysine 8 lie on the Cytoplasmic side of the membrane. A helical; Signal-anchor for type II membrane protein transmembrane segment spans residues tyrosine 9–valine 31. Residues glutamine 32–valine 521 are Lumenal-facing. Asparagine 114, asparagine 167, asparagine 300, asparagine 342, and asparagine 378 each carry an N-linked (GlcNAc...) asparagine glycan. Cysteine 330 and cysteine 373 are joined by a disulfide. The Proton donor role is filled by glutamate 387. Asparagine 499 carries an N-linked (GlcNAc...) asparagine glycan. Residue threonine 504 coordinates Ca(2+).

Belongs to the glycosyl hydrolase 47 family. It depends on Ca(2+) as a cofactor.

It localises to the membrane. The catalysed reaction is N(4)-(alpha-D-Man-(1-&gt;2)-alpha-D-Man-(1-&gt;2)-alpha-D-Man-(1-&gt;3)-[alpha-D-Man-(1-&gt;2)-alpha-D-Man-(1-&gt;3)-[alpha-D-Man-(1-&gt;2)-alpha-D-Man-(1-&gt;6)]-alpha-D-Man-(1-&gt;6)]-beta-D-Man-(1-&gt;4)-beta-D-GlcNAc-(1-&gt;4)-beta-D-GlcNAc)-L-asparaginyl-[protein] (N-glucan mannose isomer 9A1,2,3B1,2,3) + 4 H2O = N(4)-(alpha-D-Man-(1-&gt;3)-[alpha-D-Man-(1-&gt;3)-[alpha-D-Man-(1-&gt;6)]-alpha-D-Man-(1-&gt;6)]-beta-D-Man-(1-&gt;4)-beta-D-GlcNAc-(1-&gt;4)-beta-D-GlcNAc)-L-asparaginyl-[protein] (N-glucan mannose isomer 5A1,2) + 4 beta-D-mannose. It catalyses the reaction N(4)-(alpha-D-Man-(1-&gt;2)-alpha-D-Man-(1-&gt;2)-alpha-D-Man-(1-&gt;3)-[alpha-D-Man-(1-&gt;3)-[alpha-D-Man-(1-&gt;2)-alpha-D-Man-(1-&gt;6)]-alpha-D-Man-(1-&gt;6)]-beta-D-Man-(1-&gt;4)-beta-D-GlcNAc-(1-&gt;4)-beta-D-GlcNAc)-L-asparaginyl-[protein] (N-glucan mannose isomer 8A1,2,3B1,3) + 3 H2O = N(4)-(alpha-D-Man-(1-&gt;3)-[alpha-D-Man-(1-&gt;3)-[alpha-D-Man-(1-&gt;6)]-alpha-D-Man-(1-&gt;6)]-beta-D-Man-(1-&gt;4)-beta-D-GlcNAc-(1-&gt;4)-beta-D-GlcNAc)-L-asparaginyl-[protein] (N-glucan mannose isomer 5A1,2) + 3 beta-D-mannose. It participates in protein modification; protein glycosylation. Inhibited by kifunensine. Involved in glycoprotein quality control as it is important for the targeting of misfolded glycoproteins for degradation. It trims a single alpha-1,2-linked mannose residue from Man(9)GlcNAc(2) to produce Man(8)GlcNAc(2) with low efficiency. This is Endoplasmic reticulum mannosyl-oligosaccharide 1,2-alpha-mannosidase from Schizosaccharomyces pombe (strain 972 / ATCC 24843) (Fission yeast).